Consider the following 177-residue polypeptide: Cytochrome c-type biogenesis protein CcmE (177 aa).

Over 1 to 8 (MNPRRKSR) the chain is Cytoplasmic. The helical; Signal-anchor for type II membrane protein transmembrane segment at 9-29 (LKVVMAVLSGLAVAVGLTLYA) threads the bilayer. Residues 30-177 (LSQNIDLFYT…QISQPFGENK (148 aa)) lie on the Periplasmic side of the membrane. 2 residues coordinate heme: histidine 131 and tyrosine 135. The interval 134–177 (NYMPPELGDQMKKQHQPMGISEADLKGKSERDATQISQPFGENK) is disordered. Basic and acidic residues predominate over residues 156 to 166 (ADLKGKSERDA). Polar residues predominate over residues 167 to 177 (TQISQPFGENK).

It belongs to the CcmE/CycJ family.

Its subcellular location is the cell inner membrane. In terms of biological role, heme chaperone required for the biogenesis of c-type cytochromes. Transiently binds heme delivered by CcmC and transfers the heme to apo-cytochromes in a process facilitated by CcmF and CcmH. The protein is Cytochrome c-type biogenesis protein CcmE of Glaesserella parasuis serovar 5 (strain SH0165) (Haemophilus parasuis).